The chain runs to 108 residues: Large ribosomal subunit protein uL24 (108 aa).

The protein belongs to the universal ribosomal protein uL24 family. Part of the 50S ribosomal subunit.

Its function is as follows. One of two assembly initiator proteins, it binds directly to the 5'-end of the 23S rRNA, where it nucleates assembly of the 50S subunit. Functionally, one of the proteins that surrounds the polypeptide exit tunnel on the outside of the subunit. The polypeptide is Large ribosomal subunit protein uL24 (Geobacter metallireducens (strain ATCC 53774 / DSM 7210 / GS-15)).